The sequence spans 345 residues: Phosphoribosylformylglycinamidine cyclo-ligase (345 aa).

This sequence belongs to the AIR synthase family.

It is found in the cytoplasm. It catalyses the reaction 2-formamido-N(1)-(5-O-phospho-beta-D-ribosyl)acetamidine + ATP = 5-amino-1-(5-phospho-beta-D-ribosyl)imidazole + ADP + phosphate + H(+). It participates in purine metabolism; IMP biosynthesis via de novo pathway; 5-amino-1-(5-phospho-D-ribosyl)imidazole from N(2)-formyl-N(1)-(5-phospho-D-ribosyl)glycinamide: step 2/2. The sequence is that of Phosphoribosylformylglycinamidine cyclo-ligase from Klebsiella pneumoniae (strain 342).